The sequence spans 354 residues: Carbonic anhydrase 12 (354 aa).

An N-terminal signal peptide occupies residues 1 to 24 (MPHRSLRATVVLLLVILKKQPSSS). The Extracellular portion of the chain corresponds to 25–301 (APLNGSKWTY…QGLLTDTGLS (277 aa)). 4 N-linked (GlcNAc...) asparagine glycosylation sites follow: asparagine 28, asparagine 42, asparagine 80, and asparagine 88. Residues 30 to 290 (SKWTYVGPAG…FDERLVYISF (261 aa)) enclose the Alpha-carbonic anhydrase domain. Cysteine 50 and cysteine 231 are joined by a disulfide. Histidine 94 serves as the catalytic Proton donor/acceptor. Zn(2+)-binding residues include histidine 120, histidine 122, and histidine 146. 227–228 (TT) contacts substrate. Residues 302–322 (LGIILSVALAGVLGISIVLAV) traverse the membrane as a helical segment. Residues 323 to 354 (SIWLFKRKKSKKGDNKGVIYKPAIKKEAEVHA) are Cytoplasmic-facing.

It belongs to the alpha-carbonic anhydrase family. As to quaternary structure, homodimer. It depends on Zn(2+) as a cofactor.

Its subcellular location is the membrane. It localises to the cell membrane. It carries out the reaction hydrogencarbonate + H(+) = CO2 + H2O. Its activity is regulated as follows. Inhibited by acetazolamide. Reversible hydration of carbon dioxide. The chain is Carbonic anhydrase 12 from Mus musculus (Mouse).